Here is a 1189-residue protein sequence, read N- to C-terminus: Magnesium-chelatase subunit H (1189 aa).

The protein belongs to the Mg-chelatase subunit H family.

It carries out the reaction protoporphyrin IX + Mg(2+) + ATP + H2O = Mg-protoporphyrin IX + ADP + phosphate + 3 H(+). It participates in porphyrin-containing compound metabolism; bacteriochlorophyll biosynthesis (light-independent). Involved in bacteriochlorophyll pigment biosynthesis; introduces a magnesium ion into protoporphyrin IX to yield Mg-protoroporphyrin IX. The sequence is that of Magnesium-chelatase subunit H (bchH) from Rhodobacter capsulatus (strain ATCC BAA-309 / NBRC 16581 / SB1003).